Consider the following 264-residue polypeptide: Phosphonates import ATP-binding protein PhnC (264 aa).

The region spanning 3–246 (IRLQEAGLRH…MLDALYANEQ (244 aa)) is the ABC transporter domain. Residue 35–42 (GPSGAGKS) coordinates ATP.

This sequence belongs to the ABC transporter superfamily. Phosphonates importer (TC 3.A.1.9.1) family. As to quaternary structure, the complex is composed of two ATP-binding proteins (PhnC), two transmembrane proteins (PhnE) and a solute-binding protein (PhnD).

It is found in the cell inner membrane. The catalysed reaction is phosphonate(out) + ATP + H2O = phosphonate(in) + ADP + phosphate + H(+). Its function is as follows. Part of the ABC transporter complex PhnCDE involved in phosphonates import. Responsible for energy coupling to the transport system. This chain is Phosphonates import ATP-binding protein PhnC, found in Pseudomonas entomophila (strain L48).